Reading from the N-terminus, the 528-residue chain is Galactokinase (528 aa).

4 residues coordinate alpha-D-galactose: Arg53, Glu59, His60, and Asp62. Residues Gly165, Gly167, Ser169, and Ser170 each coordinate ATP. Positions 213 and 217 each coordinate alpha-D-galactose. Asp217 acts as the Proton acceptor in catalysis. Ser264, Asn265, and Lys266 together coordinate ATP. Tyr274 contacts alpha-D-galactose. Position 381 is a phosphoserine (Ser381).

It belongs to the GHMP kinase family. GalK subfamily.

It carries out the reaction alpha-D-galactose + ATP = alpha-D-galactose 1-phosphate + ADP + H(+). The protein operates within carbohydrate metabolism; galactose metabolism. Galactokinase is a key enzyme in the galactose metabolism where it catalyzes the conversion of alpha-D-galactose to galactose 1-phosphate. Can also induce the transcription of the yeast GAL genes in response to the organism being challenged with galactose as the sole source of carbon. It's striking amino acid sequence similarity to GAL3 might explain its GAL3-like induction activity. The polypeptide is Galactokinase (Saccharomyces cerevisiae (strain ATCC 204508 / S288c) (Baker's yeast)).